We begin with the raw amino-acid sequence, 422 residues long: Gamma-glutamyl phosphate reductase (422 aa).

This sequence belongs to the gamma-glutamyl phosphate reductase family.

Its subcellular location is the cytoplasm. The enzyme catalyses L-glutamate 5-semialdehyde + phosphate + NADP(+) = L-glutamyl 5-phosphate + NADPH + H(+). It participates in amino-acid biosynthesis; L-proline biosynthesis; L-glutamate 5-semialdehyde from L-glutamate: step 2/2. Catalyzes the NADPH-dependent reduction of L-glutamate 5-phosphate into L-glutamate 5-semialdehyde and phosphate. The product spontaneously undergoes cyclization to form 1-pyrroline-5-carboxylate. The sequence is that of Gamma-glutamyl phosphate reductase from Nitrosomonas eutropha (strain DSM 101675 / C91 / Nm57).